Here is a 425-residue protein sequence, read N- to C-terminus: Inositol hexakisphosphate kinase 2 (425 aa).

ATP contacts are provided by residues 206–208 and aspartate 219; that span reads ENL. Substrate is bound by residues 215-223, lysine 221, and 235-242; these read PCVLDLKMG and KAANQIRK. Aspartate 382 provides a ligand contact to ATP. Histidine 385 is a substrate binding site.

Belongs to the inositol phosphokinase (IPK) family. Highly expressed in small intestine.

It localises to the nucleus. It carries out the reaction 1D-myo-inositol hexakisphosphate + ATP = 5-diphospho-1D-myo-inositol 1,2,3,4,6-pentakisphosphate + ADP. It functions in the pathway phospholipid metabolism; phosphatidylinositol metabolism. Converts inositol hexakisphosphate (InsP6) to diphosphoinositol pentakisphosphate (InsP7/PP-InsP5). The protein is Inositol hexakisphosphate kinase 2 (Ip6k2) of Rattus norvegicus (Rat).